Here is a 306-residue protein sequence, read N- to C-terminus: N-acetylmuramic acid 6-phosphate etherase (306 aa).

Positions 55–218 (AAATLLAGGR…STGAMIKIGK (164 aa)) constitute an SIS domain. Glutamate 83 functions as the Proton donor in the catalytic mechanism. Glutamate 114 is a catalytic residue.

Belongs to the GCKR-like family. MurNAc-6-P etherase subfamily. Homodimer.

The catalysed reaction is N-acetyl-D-muramate 6-phosphate + H2O = N-acetyl-D-glucosamine 6-phosphate + (R)-lactate. It functions in the pathway amino-sugar metabolism; 1,6-anhydro-N-acetylmuramate degradation. It participates in amino-sugar metabolism; N-acetylmuramate degradation. The protein operates within cell wall biogenesis; peptidoglycan recycling. Functionally, specifically catalyzes the cleavage of the D-lactyl ether substituent of MurNAc 6-phosphate, producing GlcNAc 6-phosphate and D-lactate. Together with AnmK, is also required for the utilization of anhydro-N-acetylmuramic acid (anhMurNAc) either imported from the medium or derived from its own cell wall murein, and thus plays a role in cell wall recycling. The protein is N-acetylmuramic acid 6-phosphate etherase of Erwinia tasmaniensis (strain DSM 17950 / CFBP 7177 / CIP 109463 / NCPPB 4357 / Et1/99).